A 237-amino-acid polypeptide reads, in one-letter code: Beta-glucanase (237 aa).

The signal sequence occupies residues M1 to A23. The region spanning V28 to N237 is the GH16 domain. The cysteines at positions 55 and 84 are disulfide-linked. Residue E128 is the Nucleophile of the active site. The active-site Proton donor is E132.

It belongs to the glycosyl hydrolase 16 family.

The enzyme catalyses Hydrolysis of (1-&gt;4)-beta-D-glucosidic linkages in beta-D-glucans containing (1-&gt;3)- and (1-&gt;4)-bonds.. In Paenibacillus macerans (Bacillus macerans), this protein is Beta-glucanase.